The following is a 408-amino-acid chain: Putative F-box protein At1g53550 (408 aa).

Residues 29–74 (TCYFDPIPVDLVINILSRLSLECIARCRCVSKLWSSIIRRPNYNQL) form the F-box domain.

This is Putative F-box protein At1g53550 from Arabidopsis thaliana (Mouse-ear cress).